The primary structure comprises 433 residues: GTPase Der (433 aa).

EngA-type G domains are found at residues K5 to N167 and I174 to E349. GTP contacts are provided by residues G11–S18, D58–F62, N119–D122, G180–S187, D227–I231, and S292–D295. The KH-like domain occupies E349 to I429.

It belongs to the TRAFAC class TrmE-Era-EngA-EngB-Septin-like GTPase superfamily. EngA (Der) GTPase family. As to quaternary structure, associates with the 50S ribosomal subunit.

In terms of biological role, GTPase that plays an essential role in the late steps of ribosome biogenesis. This chain is GTPase Der, found in Borrelia garinii subsp. bavariensis (strain ATCC BAA-2496 / DSM 23469 / PBi) (Borreliella bavariensis).